The following is a 217-amino-acid chain: 3,4-dihydroxy-2-butanone 4-phosphate synthase (217 aa).

D-ribulose 5-phosphate-binding positions include 37–38 (RE), Asp-42, 150–154 (RGGHT), and Glu-174. Glu-38 serves as a coordination point for Mg(2+). His-153 provides a ligand contact to Mg(2+).

The protein belongs to the DHBP synthase family. As to quaternary structure, homodimer. Mg(2+) is required as a cofactor. The cofactor is Mn(2+).

It carries out the reaction D-ribulose 5-phosphate = (2S)-2-hydroxy-3-oxobutyl phosphate + formate + H(+). The protein operates within cofactor biosynthesis; riboflavin biosynthesis; 2-hydroxy-3-oxobutyl phosphate from D-ribulose 5-phosphate: step 1/1. Functionally, catalyzes the conversion of D-ribulose 5-phosphate to formate and 3,4-dihydroxy-2-butanone 4-phosphate. This Salmonella arizonae (strain ATCC BAA-731 / CDC346-86 / RSK2980) protein is 3,4-dihydroxy-2-butanone 4-phosphate synthase.